Reading from the N-terminus, the 439-residue chain is O-fucosyltransferase 13 (439 aa).

The chain crosses the membrane as a helical; Signal-anchor for type II membrane protein span at residues 8 to 28; the sequence is PLFVFVLTFSLLLVVILLSPS. Asn104 and Asn119 each carry an N-linked (GlcNAc...) asparagine glycan. 238 to 240 contacts substrate; the sequence is HLR. A glycan (N-linked (GlcNAc...) asparagine) is linked at Asn293.

Belongs to the glycosyltransferase GT106 family.

Its subcellular location is the membrane. The protein operates within glycan metabolism. This is O-fucosyltransferase 13 from Arabidopsis thaliana (Mouse-ear cress).